Consider the following 541-residue polypeptide: Cytochrome P450 monooxygenase claU (541 aa).

The helical transmembrane segment at 12 to 32 (VIDTLVILFSTWAFLGLIRVI) threads the bilayer. C480 contributes to the heme binding site.

The protein belongs to the cytochrome P450 family. It depends on heme as a cofactor.

It localises to the membrane. It functions in the pathway secondary metabolite biosynthesis; terpenoid biosynthesis. Its function is as follows. Cytochrome P450 monooxygenase; part of the gene cluster that mediates the biosynthesis of clavilactone A, a meroterpenoid that features a unique benzo-fused ten-membered carbocyclic ring unit with an alpha,beta-epoxy-gamma-lactone moiety, forming an intriguing 10/5/3 tricyclic nested skeleton. Cytochrome P450 monooxygenases claO, claP, claQ, claU, and claW are close orthologs, suggesting that a redundant function or pseudogenes are present in the cla cluster. These monoxygenases are not involved in clavilactone A biosynthesis nor its modification. ClaR, ClaS and ClaT are sufficient to produce clavilactone A. The biosynthesis begins with the prenyltransferase claS that transfers geranyl pyrophosphate (GPP) to hydroquinone to produces geranylhydroquinone. The cytochrome P450 monooxygenase claR then catalyzes the diradical coupling reaction between the intramolecular hydroquinone and allyl moieties to form the benzo-fused ten-membered carbocyclic ring unit of wigantol. Finally the cytochrome P450 monooxygenase claT exquisitely and stereoselectively assembles the alpha,beta-epoxy-gamma-lactone moiety, producing clavilactone A via arnebinol A. The protein is Cytochrome P450 monooxygenase claU of Ampulloclitocybe clavipes (Club foot).